Reading from the N-terminus, the 410-residue chain is D-amino acid dehydrogenase (410 aa).

Residue 9–14 (GGGIVG) participates in FAD binding.

It belongs to the DadA oxidoreductase family. Requires FAD as cofactor.

It localises to the cell inner membrane. The enzyme catalyses a D-alpha-amino acid + a quinone + H2O = a 2-oxocarboxylate + a quinol + NH4(+). With respect to regulation, activity is markedly inhibited by benzoate, and moderately by SH reagents such as p-hydroxymercuribenzoate, iodoacetamide, and iodoacetate. Its function is as follows. Catalyzes the oxidative deamination of D-amino acids. Has broad substrate specificity; is mostly active on D-proline, and to a lesser extent, on several other D-amino acids such as D-alanine, D-phenylalanine and D-serine. Mediates electron transport from D-proline to coenzyme Q1 in vitro, and is involved in the electron transport chain from D-proline to the c-type cytochrome in vivo. The sequence is that of D-amino acid dehydrogenase from Helicobacter pylori (Campylobacter pylori).